We begin with the raw amino-acid sequence, 401 residues long: Nodal homolog 3-A (401 aa).

Residues 1–18 (MAFLSLFLCLVFSSPLMA) form the signal peptide. Residues 19-274 (MPPALQGRKA…KVNGFRRLRR (256 aa)) constitute a propeptide that is removed on maturation. Asn-168, Asn-337, and Asn-344 each carry an N-linked (GlcNAc...) asparagine glycan. Intrachain disulfides connect Cys-299–Cys-365 and Cys-328–Cys-396.

This sequence belongs to the TGF-beta family. In terms of assembly, monomer. The propeptide region interacts with bmp4 in a non-covalent manner. In terms of tissue distribution, expressed in the dorsal marginal region of late blastula, becoming restricted to the Spemann organizer at the early gastrula stage.

The protein localises to the secreted. Functionally, exhibits mesoderm-dorsalizing activity and neural-inducing activity, but lacks mesoderm-inducing activity. Regulates the expression of specific mesodermal and neural genes. Induces convergent extension movements at the embryonic midline by activating the fgf signaling pathway to induce t/bra expression in the organizer region. Acts with wnt11 to induce Spemann organizer cells and induce axis formation. The unprocessed protein antagonizes bmp-signaling. The chain is Nodal homolog 3-A from Xenopus tropicalis (Western clawed frog).